Reading from the N-terminus, the 527-residue chain is Bifunctional pantoate ligase/cytidylate kinase (527 aa).

Residues 1 to 277 (MRQLISPEAL…VGTARLIDNL (277 aa)) are pantoate--beta-alanine ligase. 27–34 (MGALHAGH) contributes to the ATP binding site. The Proton donor role is filled by histidine 34. Glutamine 58 is a (R)-pantoate binding site. Glutamine 58 contacts beta-alanine. 147–150 (GEKD) provides a ligand contact to ATP. Residue glutamine 153 participates in (R)-pantoate binding. ATP contacts are provided by residues valine 176 and 184–187 (LSSR). The interval 278 to 527 (TLQGRRPIIA…GQTPSPLSLG (250 aa)) is cytidylate kinase. Positions 507–527 (GLGDSSPQATPGQTPSPLSLG) are disordered. The segment covering 511 to 527 (SSPQATPGQTPSPLSLG) has biased composition (polar residues).

In the N-terminal section; belongs to the pantothenate synthetase family. This sequence in the C-terminal section; belongs to the cytidylate kinase family. Type 1 subfamily.

It localises to the cytoplasm. The enzyme catalyses (R)-pantoate + beta-alanine + ATP = (R)-pantothenate + AMP + diphosphate + H(+). It catalyses the reaction CMP + ATP = CDP + ADP. The catalysed reaction is dCMP + ATP = dCDP + ADP. Its pathway is cofactor biosynthesis; (R)-pantothenate biosynthesis; (R)-pantothenate from (R)-pantoate and beta-alanine: step 1/1. Catalyzes the condensation of pantoate with beta-alanine in an ATP-dependent reaction via a pantoyl-adenylate intermediate. Functionally, catalyzes the transfer of a phosphate group from ATP to either CMP or dCMP to form CDP or dCDP and ADP, respectively. The sequence is that of Bifunctional pantoate ligase/cytidylate kinase from Synechococcus elongatus (strain ATCC 33912 / PCC 7942 / FACHB-805) (Anacystis nidulans R2).